A 295-amino-acid chain; its full sequence is Protein U26 (295 aa).

The next 8 membrane-spanning stretches (helical) occupy residues 4-24, 31-51, 66-86, 103-123, 183-203, 218-238, 243-263, and 274-294; these read LTDS…LYTF, SPLG…LTFK, IVFL…VVMI, VMIM…SLFF, FTVE…FLSM, VFFK…ILSG, VCLY…SIML, and FYAG…MYFG.

The protein localises to the membrane. In Human herpesvirus 6A (strain Uganda-1102) (HHV-6 variant A), this protein is Protein U26 (U26).